The sequence spans 366 residues: Chaperone protein DnaJ (366 aa).

The region spanning 5-69 is the J domain; that stretch reads DYYEVLGVSK…QKRAQYDQFG (65 aa). The segment at 128-210 adopts a CR-type zinc-finger fold; that stretch reads GKELNVEIPV…CHGTGKVRKR (83 aa). C141, C144, C158, C161, C184, C187, C198, and C201 together coordinate Zn(2+). CXXCXGXG motif repeat units follow at residues 141–148, 158–165, 184–191, and 198–205; these read CDTCHGSG, CKYCSGTG, CRHCSGTG, and CTTCHGTG.

The protein belongs to the DnaJ family. As to quaternary structure, homodimer. The cofactor is Zn(2+).

It localises to the cytoplasm. Participates actively in the response to hyperosmotic and heat shock by preventing the aggregation of stress-denatured proteins and by disaggregating proteins, also in an autonomous, DnaK-independent fashion. Unfolded proteins bind initially to DnaJ; upon interaction with the DnaJ-bound protein, DnaK hydrolyzes its bound ATP, resulting in the formation of a stable complex. GrpE releases ADP from DnaK; ATP binding to DnaK triggers the release of the substrate protein, thus completing the reaction cycle. Several rounds of ATP-dependent interactions between DnaJ, DnaK and GrpE are required for fully efficient folding. Also involved, together with DnaK and GrpE, in the DNA replication of plasmids through activation of initiation proteins. The polypeptide is Chaperone protein DnaJ (Bacillus cytotoxicus (strain DSM 22905 / CIP 110041 / 391-98 / NVH 391-98)).